The following is a 209-amino-acid chain: Kynurenine formamidase (209 aa).

Phe18 lines the substrate pocket. Residues His48, His52, and Asp54 each coordinate Zn(2+). His58 acts as the Proton donor/acceptor in catalysis. Residues His160 and Glu172 each coordinate Zn(2+).

This sequence belongs to the Cyclase 1 superfamily. KynB family. In terms of assembly, homodimer. Requires Zn(2+) as cofactor.

It catalyses the reaction N-formyl-L-kynurenine + H2O = L-kynurenine + formate + H(+). Its pathway is amino-acid degradation; L-tryptophan degradation via kynurenine pathway; L-kynurenine from L-tryptophan: step 2/2. Functionally, catalyzes the hydrolysis of N-formyl-L-kynurenine to L-kynurenine, the second step in the kynurenine pathway of tryptophan degradation. The chain is Kynurenine formamidase from Bordetella petrii (strain ATCC BAA-461 / DSM 12804 / CCUG 43448).